The chain runs to 96 residues: Probable RNA-binding protein YqeI (96 aa).

The CRM domain occupies 1-96 (MLTGKQKRFL…SKENKQIELP (96 aa)).

The polypeptide is Probable RNA-binding protein YqeI (yqeI) (Bacillus subtilis (strain 168)).